We begin with the raw amino-acid sequence, 100 residues long: NADH-quinone oxidoreductase subunit K (100 aa).

3 helical membrane passes run Pro-3–Ile-23, Leu-29–Phe-49, and Ile-60–Leu-80.

The protein belongs to the complex I subunit 4L family. As to quaternary structure, NDH-1 is composed of 14 different subunits. Subunits NuoA, H, J, K, L, M, N constitute the membrane sector of the complex.

It is found in the cell membrane. It carries out the reaction a quinone + NADH + 5 H(+)(in) = a quinol + NAD(+) + 4 H(+)(out). Functionally, NDH-1 shuttles electrons from NADH, via FMN and iron-sulfur (Fe-S) centers, to quinones in the respiratory chain. The immediate electron acceptor for the enzyme in this species is believed to be ubiquinone. Couples the redox reaction to proton translocation (for every two electrons transferred, four hydrogen ions are translocated across the cytoplasmic membrane), and thus conserves the redox energy in a proton gradient. This is NADH-quinone oxidoreductase subunit K from Roseiflexus castenholzii (strain DSM 13941 / HLO8).